A 1351-amino-acid polypeptide reads, in one-letter code: Serine-rich adhesin for platelets (1351 aa).

The first 89 residues, 1-89, serve as a signal peptide directing secretion; that stretch reads MSKRQKEFHD…VNMLHDQQAF (89 aa). Residues 90–230 are serine-rich repeat region 1, SRR1; it reads AASDAPLTSE…KTSTTSTSTA (141 aa). A compositionally biased stretch (polar residues) spans 100-111; the sequence is LNTQSETVGNQN. 2 disordered regions span residues 100–228 and 751–1323; these read LNTQ…TSTS and NSMS…GLLG. 2 stretches are compositionally biased toward low complexity: residues 112-133 and 149-228; these read STTI…NSSS and NVTS…TSTS. A non-repeat region (NRR) region spans residues 231–751; sequence PIKLRTFSRL…TTFKYEVTRN (521 aa). A compositionally biased stretch (low complexity) spans 752 to 1294; the sequence is SMSDSVSTSG…SQSTLSATSE (543 aa). The serine-rich repeat region 1, SRR1 stretch occupies residues 752–1312; the sequence is SMSDSVSTSG…AQSEKRLPDT (561 aa). An LPXTG sorting signal motif is present at residues 1309–1313; sequence LPDTG. At threonine 1312 the chain carries Pentaglycyl murein peptidoglycan amidated threonine. A propeptide spans 1313-1351 (removed by sortase); that stretch reads GDSIKQNGLLGGVMTLLVGLGLMKRKKKKDENDQDDSQA.

The protein belongs to the serine-rich repeat protein (SRRP) family. In terms of processing, proteolytically cleaved by a metalloprotease. Post-translationally, glycosylated. It is probable that most of the Ser residues in SSR1 and SSR2 are O-GlcNAcylated. Sequential glycosylation by sugar transferases are able to generate complex sugar polymorphisms.

The protein resides in the secreted. The protein localises to the cell wall. In terms of biological role, mediates binding to human platelets, possibly through a receptor-ligand interaction. Probably associated with virulence in endovascular infection. The polypeptide is Serine-rich adhesin for platelets (sasA) (Staphylococcus aureus (strain MRSA252)).